A 402-amino-acid chain; its full sequence is Galactoside 2-alpha-L-fucosyltransferase (402 aa).

At 1 to 6 (MRYNSN) the chain is on the cytoplasmic side. A helical; Signal-anchor for type II membrane protein transmembrane segment spans residues 7-27 (YLMYFCLVLGIFANIYVIIKI). At 28-402 (TLGSSHILEY…TDLNGKISKY (375 aa)) the chain is on the lumenal side. Asn-119, Asn-175, and Asn-301 each carry an N-linked (GlcNAc...) asparagine glycan.

Belongs to the glycosyltransferase 11 family. In terms of assembly, may form oligomers. Post-translationally, N-glycosylated. Expression is restricted to pharyngeal neurons and gland cells.

Its subcellular location is the golgi apparatus. The protein resides in the golgi stack membrane. It participates in protein modification; protein glycosylation. In terms of biological role, selectively catalyzes the addition of fucose in alpha 1-2 linkage to Gal-beta-(1-&gt;3)-GalNAc-alpha-R, Gal-beta-(1-&gt;3)-(GlcNAc-beta-(1-&gt;6))-GalNAc-alpha-R and Gal-beta-(1-&gt;3)-GalNAc acceptors but not Gal-beta-(1-&gt;3)-GlcNAc-beta-(1-&gt;3)-Gal-beta-(1-&gt;4)-Glc in vitro. This is Galactoside 2-alpha-L-fucosyltransferase from Caenorhabditis elegans.